The chain runs to 547 residues: Chaperonin GroEL 1 (547 aa).

ATP-binding positions include 30-33, K51, 87-91, G415, and D496; these read TLGP and DGTTT.

The protein belongs to the chaperonin (HSP60) family. Forms a cylinder of 14 subunits composed of two heptameric rings stacked back-to-back. Interacts with the co-chaperonin GroES.

It localises to the cytoplasm. It carries out the reaction ATP + H2O + a folded polypeptide = ADP + phosphate + an unfolded polypeptide.. Its function is as follows. Together with its co-chaperonin GroES, plays an essential role in assisting protein folding. The GroEL-GroES system forms a nano-cage that allows encapsulation of the non-native substrate proteins and provides a physical environment optimized to promote and accelerate protein folding. The sequence is that of Chaperonin GroEL 1 from Rhodopseudomonas palustris (strain BisA53).